Here is a 694-residue protein sequence, read N- to C-terminus: Putative ankyrin repeat protein RBE_0921 (694 aa).

ANK repeat units lie at residues 122–151, 155–185, 216–245, 249–275, 279–317, 321–350, 351–382, 384–413, 423–452, and 456–485; these read LGKT…NINV, NGRN…NINS, FNRT…NVEA, TGET…NTEA, LGRT…NPNA, YGFT…KFKK, NRYE…NIND, NGQN…DNGK, QRNT…DINA, and DGET…DINI.

The chain is Putative ankyrin repeat protein RBE_0921 from Rickettsia bellii (strain RML369-C).